Reading from the N-terminus, the 483-residue chain is UDP-N-acetylmuramate--L-alanine ligase (483 aa).

128 to 134 (GTHGKTT) lines the ATP pocket.

The protein belongs to the MurCDEF family.

The protein localises to the cytoplasm. It carries out the reaction UDP-N-acetyl-alpha-D-muramate + L-alanine + ATP = UDP-N-acetyl-alpha-D-muramoyl-L-alanine + ADP + phosphate + H(+). It functions in the pathway cell wall biogenesis; peptidoglycan biosynthesis. Functionally, cell wall formation. In Shewanella violacea (strain JCM 10179 / CIP 106290 / LMG 19151 / DSS12), this protein is UDP-N-acetylmuramate--L-alanine ligase.